A 169-amino-acid polypeptide reads, in one-letter code: Ribosome maturation factor RimM (169 aa).

Positions E97–Y169 constitute a PRC barrel domain.

Belongs to the RimM family. In terms of assembly, binds ribosomal protein uS19.

It localises to the cytoplasm. In terms of biological role, an accessory protein needed during the final step in the assembly of 30S ribosomal subunit, possibly for assembly of the head region. Essential for efficient processing of 16S rRNA. May be needed both before and after RbfA during the maturation of 16S rRNA. It has affinity for free ribosomal 30S subunits but not for 70S ribosomes. This Neisseria meningitidis serogroup B (strain ATCC BAA-335 / MC58) protein is Ribosome maturation factor RimM.